The chain runs to 440 residues: MEYQILKMSLCLFILLFLTPGILCICPLQCICTERHRHVDCSGRNLSTLPSGLQENIIHLNLSYNHFTDLHNQLTQYTNLRTLDISNNRLESLPAHLPRSLWNMSAANNNIKLLDKSDTAYQWNLKYLDVSKNMLEKVVLIKNTLRSLEVLNLSSNKLWTVPTNMPSKLHIVDLSNNSLTQILPGTLINLTNLTHLYLHNNKFTFIPDQSFDQLFQLQEITLYNNRWSCDHKQNITYLLKWMMETKAHVIGTPCSTQISSLKEHNMYPTPSGFTSSLFTVSGMQTVDTINSLSVVTQPKVTKIPKQYRTKETTFGATLSKDTTFTSTDKAFVPYPEDTSTETINSHEAAAATLTIHLQDGMVTNTSLTSSTKSSPTPMTLSITSGMPNNFSEMPQQSTTLNLWREETTTNVKTPLPSVANAWKVNASFLLLLNVVVMLAV.

The signal sequence occupies residues 1–24; sequence MEYQILKMSLCLFILLFLTPGILC. One can recognise an LRRNT domain in the interval 25-55; sequence ICPLQCICTERHRHVDCSGRNLSTLPSGLQE. Residues Asn45 and Asn61 are each glycosylated (N-linked (GlcNAc...) asparagine). 8 LRR repeats span residues 56 to 77, 79 to 100, 101 to 121, 124 to 145, 147 to 168, 169 to 189, 192 to 213, and 216 to 239; these read NIIH…LTQY, NLRT…LPRS, LWNM…DTAY, NLKY…KNTL, SLEV…MPSK, LHIV…TLIN, NLTH…SFDQ, and QLQE…TYLL. Asn103 carries N-linked (GlcNAc...) asparagine glycosylation. Asn152, Asn176, Asn189, Asn192, and Asn234 each carry an N-linked (GlcNAc...) asparagine glycan. Ser/Thr-rich repeat units follow at residues 229-270, 271-292, 293-335, 336-377, and 378-416; these read CDHK…YPTP, SGFT…INSL, SVVT…VPYP, EDTS…SPTP, and MTLS…TPLP. N-linked (GlcNAc...) asparagine glycosylation is found at Asn364 and Asn389. The GPI-anchor amidated serine moiety is linked to residue Ser417. The propeptide at 418 to 440 is removed in mature form; that stretch reads VANAWKVNASFLLLLNVVVMLAV. A glycan (N-linked (GlcNAc...) asparagine) is linked at Asn425.

In terms of assembly, binds to RTN4R. O-glycosylated in its Ser/Thr-rich repeat domain. Oligodendrocytes and myelin of the central nervous system.

Its subcellular location is the cell membrane. Cell adhesion molecule contributing to the interactive process required for myelination in the central nervous system. The polypeptide is Oligodendrocyte-myelin glycoprotein (OMG) (Homo sapiens (Human)).